Consider the following 409-residue polypeptide: Endoglucanase B (409 aa).

The signal sequence occupies residues 1–21 (MKLKRIAALLTAAVMSVGVMA). The interval 23–66 (CGGSKSDDKSKADTKSAAETSGAEGDSSESEEIPVSQTHTNDPM) is disordered. Positions 27–38 (KSDDKSKADTKS) are enriched in basic and acidic residues. Residues 57-66 (VSQTHTNDPM) show a composition bias toward polar residues. The Proton donor role is filled by Glu212. Glu332 serves as the catalytic Nucleophile.

Belongs to the glycosyl hydrolase 5 (cellulase A) family.

The catalysed reaction is Endohydrolysis of (1-&gt;4)-beta-D-glucosidic linkages in cellulose, lichenin and cereal beta-D-glucans.. This Ruminococcus albus protein is Endoglucanase B (celB).